Reading from the N-terminus, the 343-residue chain is Anthranilate phosphoribosyltransferase (343 aa).

Residues Gly-86, 89–90 (GD), Thr-94, 96–99 (NIST), 114–122 (KHGNRSASG), and Ser-126 each bind 5-phospho-alpha-D-ribose 1-diphosphate. Gly-86 contributes to the anthranilate binding site. Residue Ser-98 participates in Mg(2+) binding. Asn-117 lines the anthranilate pocket. Arg-172 is an anthranilate binding site. Residues Asp-231 and Glu-232 each contribute to the Mg(2+) site.

The protein belongs to the anthranilate phosphoribosyltransferase family. Homodimer. Mg(2+) is required as a cofactor.

It carries out the reaction N-(5-phospho-beta-D-ribosyl)anthranilate + diphosphate = 5-phospho-alpha-D-ribose 1-diphosphate + anthranilate. It functions in the pathway amino-acid biosynthesis; L-tryptophan biosynthesis; L-tryptophan from chorismate: step 2/5. Functionally, catalyzes the transfer of the phosphoribosyl group of 5-phosphorylribose-1-pyrophosphate (PRPP) to anthranilate to yield N-(5'-phosphoribosyl)-anthranilate (PRA). The polypeptide is Anthranilate phosphoribosyltransferase (Synechococcus sp. (strain JA-3-3Ab) (Cyanobacteria bacterium Yellowstone A-Prime)).